Here is a 278-residue protein sequence, read N- to C-terminus: Acetyl-coenzyme A carboxylase carboxyl transferase subunit beta (278 aa).

The CoA carboxyltransferase N-terminal domain maps to 23–278 (LWSKCDSCGA…QLIKLLGHMK (256 aa)). Residues Cys27, Cys30, Cys46, and Cys49 each contribute to the Zn(2+) site. The C4-type zinc finger occupies 27–49 (CDSCGAALHKKQLEDHLYTCPHC).

The protein belongs to the AccD/PCCB family. As to quaternary structure, acetyl-CoA carboxylase is a heterohexamer composed of biotin carboxyl carrier protein (AccB), biotin carboxylase (AccC) and two subunits each of ACCase subunit alpha (AccA) and ACCase subunit beta (AccD). It depends on Zn(2+) as a cofactor.

The protein resides in the cytoplasm. The catalysed reaction is N(6)-carboxybiotinyl-L-lysyl-[protein] + acetyl-CoA = N(6)-biotinyl-L-lysyl-[protein] + malonyl-CoA. The protein operates within lipid metabolism; malonyl-CoA biosynthesis; malonyl-CoA from acetyl-CoA: step 1/1. Its function is as follows. Component of the acetyl coenzyme A carboxylase (ACC) complex. Biotin carboxylase (BC) catalyzes the carboxylation of biotin on its carrier protein (BCCP) and then the CO(2) group is transferred by the transcarboxylase to acetyl-CoA to form malonyl-CoA. In Chlorobaculum tepidum (strain ATCC 49652 / DSM 12025 / NBRC 103806 / TLS) (Chlorobium tepidum), this protein is Acetyl-coenzyme A carboxylase carboxyl transferase subunit beta.